Reading from the N-terminus, the 109-residue chain is Nucleoid-associated protein Sbal223_1770 (109 aa).

It belongs to the YbaB/EbfC family. As to quaternary structure, homodimer.

It localises to the cytoplasm. The protein localises to the nucleoid. Binds to DNA and alters its conformation. May be involved in regulation of gene expression, nucleoid organization and DNA protection. The sequence is that of Nucleoid-associated protein Sbal223_1770 from Shewanella baltica (strain OS223).